The sequence spans 349 residues: 3-dehydroquinate synthase (349 aa).

NAD(+)-binding positions include 63–68, 97–101, 121–122, Lys-134, Lys-143, and 161–164; these read DGEEYK, GVIGD, TT, and FLTT. Zn(2+) is bound by residues Glu-176, His-235, and His-252.

This sequence belongs to the sugar phosphate cyclases superfamily. Dehydroquinate synthase family. Co(2+) serves as cofactor. Zn(2+) is required as a cofactor. It depends on NAD(+) as a cofactor.

The protein localises to the cytoplasm. It catalyses the reaction 7-phospho-2-dehydro-3-deoxy-D-arabino-heptonate = 3-dehydroquinate + phosphate. It participates in metabolic intermediate biosynthesis; chorismate biosynthesis; chorismate from D-erythrose 4-phosphate and phosphoenolpyruvate: step 2/7. Functionally, catalyzes the conversion of 3-deoxy-D-arabino-heptulosonate 7-phosphate (DAHP) to dehydroquinate (DHQ). The polypeptide is 3-dehydroquinate synthase (Sulfurimonas denitrificans (strain ATCC 33889 / DSM 1251) (Thiomicrospira denitrificans (strain ATCC 33889 / DSM 1251))).